We begin with the raw amino-acid sequence, 54 residues long: Hydrophobic protein RCI2A (54 aa).

The next 2 helical transmembrane spans lie at 2–22 (STATFVDIIIAILLPPLGVFL) and 32–52 (ICLVLTLLGYIPGIIYAIYVL).

The protein belongs to the UPF0057 (PMP3) family.

Its subcellular location is the membrane. This chain is Hydrophobic protein RCI2A (RCI2A), found in Arabidopsis thaliana (Mouse-ear cress).